The sequence spans 214 residues: Thymidylate kinase (214 aa).

Residue 7-14 participates in ATP binding; the sequence is GIDGAGKS.

It belongs to the thymidylate kinase family.

The enzyme catalyses dTMP + ATP = dTDP + ADP. Functionally, phosphorylation of dTMP to form dTDP in both de novo and salvage pathways of dTTP synthesis. The sequence is that of Thymidylate kinase from Chlorobaculum tepidum (strain ATCC 49652 / DSM 12025 / NBRC 103806 / TLS) (Chlorobium tepidum).